The sequence spans 623 residues: Kelch-like protein diablo (623 aa).

A disordered region spans residues 1 to 54 (MGDLPGSGSTAQPRDAAVTGTGGNSTAGGGSSVGSTAVDRPPSPARLSHTSEKH). Thr-19 carries the phosphothreonine modification. Residues 20-32 (GTGGNSTAGGGSS) are compositionally biased toward gly residues. The region spanning 72 to 139 (CDVVLNVGGR…CYTAHIIVEE (68 aa)) is the BTB domain. Residues 174-276 (CLGIRAFADT…SPKFLVGTVG (103 aa)) enclose the BACK domain. Kelch repeat units lie at residues 323–369 (VLFA…VLND), 371–417 (LYAV…VLDE), 418–464 (FLYA…VLGG), 466–511 (LYAI…VFNN), 513–558 (IYAV…VVNG), and 559–605 (QLYA…VMRA).

It functions in the pathway protein modification; protein ubiquitination. In terms of biological role, probable substrate-specific adapter of an E3 ubiquitin-protein ligase complex which mediates the ubiquitination and subsequent proteasomal degradation of target proteins. May have a role in synapse differentiation and growth. The chain is Kelch-like protein diablo from Drosophila simulans (Fruit fly).